The primary structure comprises 75 residues: ORF2p protein (75 aa).

Residues 13-18 (WIGHPV) are important for viral replication in intestinal cells. A transmembrane helix spans residues 23-45 (IVYLFVGFTPLTLETLHTLNYII). The disordered stretch occupies residues 53-75 (APRSPHSDPARMRIPTQPRKAPL).

Its subcellular location is the host cytoplasmic vesicle membrane. In terms of biological role, facilitates virus release from intestinal cells in vitro, possibly through the host autophagic pathway. The chain is ORF2p protein from Human enterovirus 71 (strain USA/BrCr/1970) (EV71).